Consider the following 304-residue polypeptide: MSVAPIDFQQVEKRYDDKLVVDGLSFHVQPGECFGLLGPNGAGKTTTLKMLLGITHPDAGSISLCGEPVPSRARHARQRVGVVPQFDNLDPDFTVRENLLVFARYFGLTAHAARALVPPLLEFAKLESKADAKVGELSGGMKRRLTLARALVNDPDVLVLDEPTTGLDPQARHLMWERLRSLLARGKTILLTTHFMEEAERLCHRLCVIEEGRKIAEGAPRMLIEAEIGCDVIEIYGPDPVQLRDELAPFAERTEISGETLFCYVDNPEPIHARLKGRAGLRYLHRPANLEDVFLRLTGREMLD.

One can recognise an ABC transporter domain in the interval 6-236 (IDFQQVEKRY…EIGCDVIEIY (231 aa)). Residue 38–45 (GPNGAGKT) participates in ATP binding.

Belongs to the ABC transporter superfamily. Lipooligosaccharide exporter (TC 3.A.1.102) family. As to quaternary structure, the complex is composed of two ATP-binding proteins (NodI) and two transmembrane proteins (NodJ).

It is found in the cell inner membrane. In terms of biological role, part of the ABC transporter complex NodIJ involved in the export of the nodulation factors (Nod factors), the bacterial signal molecules that induce symbiosis and subsequent nodulation induction. Nod factors are LCO (lipo-chitin oligosaccharide), a modified beta-1,4-linked N-acetylglucosamine oligosaccharide. This subunit is responsible for energy coupling to the transport system. The sequence is that of Nod factor export ATP-binding protein I from Burkholderia pseudomallei (strain 1710b).